Here is a 130-residue protein sequence, read N- to C-terminus: RutC family protein slr0709 (130 aa).

Belongs to the RutC family.

This is RutC family protein slr0709 from Synechocystis sp. (strain ATCC 27184 / PCC 6803 / Kazusa).